The chain runs to 280 residues: Ribonuclease P protein subunit p38 (280 aa).

Alanine 2 bears the N-acetylalanine mark. A phosphoserine mark is found at serine 12, serine 221, and serine 230. Positions 202–227 are disordered; that stretch reads WLPDRTQGPTDSLETEPSESQDNEIL. Positions 214–226 are enriched in acidic residues; sequence LETEPSESQDNEI. The disordered stretch occupies residues 254–280; the sequence is QPLKIKKLIPNPSKIRKPPKSKKSISK. Residues 267 to 280 show a composition bias toward basic residues; sequence KIRKPPKSKKSISK.

It belongs to the eukaryotic ribosomal protein eL8 family. In terms of assembly, component of nuclear RNase P and RNase MRP ribonucleoproteins. RNase P consists of a catalytic RNA moiety and about 10 protein subunits; POP1, POP4, POP5, POP7, RPP14, RPP21, RPP25, RPP30, RPP38 and RPP40. Within the RNase P complex, POP1, POP7 and RPP25 form the 'finger' subcomplex, POP5, RPP14, RPP40 and homodimeric RPP30 form the 'palm' subcomplex, and RPP21, POP4 and RPP38 form the 'wrist' subcomplex. All subunits of the RNase P complex interact with the catalytic RNA. Several subunits of RNase P are also part of the RNase MRP complex. RNase MRP consists of a catalytic RNA moiety and about 8 protein subunits; POP1, POP7, RPP25, RPP30, RPP38, RPP40 and possibly also POP4 and POP5.

The protein resides in the nucleus. It localises to the nucleolus. Its function is as follows. Component of ribonuclease P, a ribonucleoprotein complex that generates mature tRNA molecules by cleaving their 5'-ends. Also a component of the MRP ribonuclease complex, which cleaves pre-rRNA sequences. The chain is Ribonuclease P protein subunit p38 (Rpp38) from Mus musculus (Mouse).